A 210-amino-acid polypeptide reads, in one-letter code: Small ribosomal subunit protein uS3 (210 aa).

In terms of domain architecture, KH type-2 spans 17-86 (IDEFLEKELR…NPQIEVEEIK (70 aa)).

It belongs to the universal ribosomal protein uS3 family. As to quaternary structure, part of the 30S ribosomal subunit.

Functionally, binds the lower part of the 30S subunit head. The protein is Small ribosomal subunit protein uS3 of Pyrococcus furiosus (strain ATCC 43587 / DSM 3638 / JCM 8422 / Vc1).